Here is a 404-residue protein sequence, read N- to C-terminus: Methyltransferase-like protein 22 (404 aa).

2 disordered regions span residues 60 to 102 and 115 to 145; these read TDSG…SLQA and QLDEDGDLDVVRRPRAASDSNPAGPLRDKVH. Positions 68–78 are enriched in basic and acidic residues; the sequence is SHRDVHTKEPP. Residues 79–88 show a composition bias toward low complexity; it reads SAETGSTGSP. Ser-132 bears the Phosphoserine mark.

It belongs to the methyltransferase superfamily. METTL22 family. Interacts with members of the heat shock protein 90 and 70 families; these proteins probably are methylation substrates.

It localises to the nucleus. The catalysed reaction is L-lysyl-[protein] + 3 S-adenosyl-L-methionine = N(6),N(6),N(6)-trimethyl-L-lysyl-[protein] + 3 S-adenosyl-L-homocysteine + 3 H(+). Its function is as follows. Protein N-lysine methyltransferase. Trimethylates KIN at Lys-135 (in vitro). This chain is Methyltransferase-like protein 22 (METTL22), found in Homo sapiens (Human).